The sequence spans 501 residues: Aspartyl/glutamyl-tRNA(Asn/Gln) amidotransferase subunit B (501 aa).

The tract at residues 271-299 (VQETRHYQETDGSTSKGRPKETAEDYRYF) is disordered. Basic and acidic residues predominate over residues 288-299 (RPKETAEDYRYF).

This sequence belongs to the GatB/GatE family. GatB subfamily. Heterotrimer of A, B and C subunits.

It catalyses the reaction L-glutamyl-tRNA(Gln) + L-glutamine + ATP + H2O = L-glutaminyl-tRNA(Gln) + L-glutamate + ADP + phosphate + H(+). The enzyme catalyses L-aspartyl-tRNA(Asn) + L-glutamine + ATP + H2O = L-asparaginyl-tRNA(Asn) + L-glutamate + ADP + phosphate + 2 H(+). Allows the formation of correctly charged Asn-tRNA(Asn) or Gln-tRNA(Gln) through the transamidation of misacylated Asp-tRNA(Asn) or Glu-tRNA(Gln) in organisms which lack either or both of asparaginyl-tRNA or glutaminyl-tRNA synthetases. The reaction takes place in the presence of glutamine and ATP through an activated phospho-Asp-tRNA(Asn) or phospho-Glu-tRNA(Gln). This is Aspartyl/glutamyl-tRNA(Asn/Gln) amidotransferase subunit B from Corynebacterium diphtheriae (strain ATCC 700971 / NCTC 13129 / Biotype gravis).